The primary structure comprises 361 residues: Peptide chain release factor 1 (361 aa).

Glutamine 237 is modified (N5-methylglutamine). Residues 283–307 (AQQQEQQEQQSSTRKELIGSGDRSQ) are disordered.

Belongs to the prokaryotic/mitochondrial release factor family. Methylated by PrmC. Methylation increases the termination efficiency of RF1.

Its subcellular location is the cytoplasm. Peptide chain release factor 1 directs the termination of translation in response to the peptide chain termination codons UAG and UAA. This is Peptide chain release factor 1 from Vesicomyosocius okutanii subsp. Calyptogena okutanii (strain HA).